The chain runs to 495 residues: uncharacterized protein (495 aa).

Positions 16, 36, 45, 56, 62, and 105 each coordinate FAD.

It belongs to the FAD-binding monooxygenase family. FAD is required as a cofactor.

This is an uncharacterized protein from Mycobacterium tuberculosis (strain CDC 1551 / Oshkosh).